A 100-amino-acid chain; its full sequence is Urease subunit gamma (100 aa).

This sequence belongs to the urease gamma subunit family. As to quaternary structure, heterotrimer of UreA (gamma), UreB (beta) and UreC (alpha) subunits. Three heterotrimers associate to form the active enzyme.

Its subcellular location is the cytoplasm. The catalysed reaction is urea + 2 H2O + H(+) = hydrogencarbonate + 2 NH4(+). Its pathway is nitrogen metabolism; urea degradation; CO(2) and NH(3) from urea (urease route): step 1/1. The sequence is that of Urease subunit gamma from Pseudarthrobacter chlorophenolicus (strain ATCC 700700 / DSM 12829 / CIP 107037 / JCM 12360 / KCTC 9906 / NCIMB 13794 / A6) (Arthrobacter chlorophenolicus).